The primary structure comprises 349 residues: Isopentenyl-diphosphate delta-isomerase (349 aa).

Position 6-7 (6-7 (RK)) interacts with substrate. Residues 62-64 (AMT), Ser93, and Asn122 each bind FMN. A substrate-binding site is contributed by Gln152. Glu153 contacts Mg(2+). Residues Lys184, Thr214, 258–259 (GG), and 280–281 (AG) contribute to the FMN site.

Belongs to the IPP isomerase type 2 family. As to quaternary structure, homooctamer. Dimer of tetramers. FMN is required as a cofactor. Requires NADPH as cofactor. The cofactor is Mg(2+).

It localises to the cytoplasm. It carries out the reaction isopentenyl diphosphate = dimethylallyl diphosphate. Its function is as follows. Involved in the biosynthesis of isoprenoids. Catalyzes the 1,3-allylic rearrangement of the homoallylic substrate isopentenyl (IPP) to its allylic isomer, dimethylallyl diphosphate (DMAPP). This chain is Isopentenyl-diphosphate delta-isomerase, found in Bacillus cereus (strain B4264).